A 109-amino-acid polypeptide reads, in one-letter code: Iron-sulfur cluster assembly protein CyaY (109 aa).

It belongs to the frataxin family.

Its function is as follows. Involved in iron-sulfur (Fe-S) cluster assembly. May act as a regulator of Fe-S biogenesis. The sequence is that of Iron-sulfur cluster assembly protein CyaY from Burkholderia lata (strain ATCC 17760 / DSM 23089 / LMG 22485 / NCIMB 9086 / R18194 / 383).